The primary structure comprises 111 residues: WAP four-disulfide core domain protein 12 (111 aa).

Positions 1–23 (MGSSSFLVLMVSLTLVTLVAVEG) are cleaved as a signal peptide. The 48-residue stretch at 27–74 (DIEKAGVCPADNVRCFKSDPPQCHTDQDCLGERKCCYLHCGFKCVIPV) folds into the WAP domain. Cystine bridges form between Cys-34–Cys-62, Cys-41–Cys-66, Cys-49–Cys-61, and Cys-55–Cys-70. A disordered region spans residues 80 to 111 (GGNKDEDVSRPYPEPGWEAKCPGSSSTRCPQK). Over residues 102–111 (GSSSTRCPQK) the composition is skewed to polar residues.

The protein resides in the secreted. Its function is as follows. Antibacterial protein. Putative acid-stable proteinase inhibitor. The protein is WAP four-disulfide core domain protein 12 (WFDC12) of Pan troglodytes (Chimpanzee).